The primary structure comprises 757 residues: MDVNPTLLFLKVPAQNAISTTFPYTGDPPYSHGTGTGYTMDTVNRTHQYSEKGKWTTNTETGAPQLNPIDGPLPEDNEPSGYAQTDCVLEAMAFLEESHPGIFENSCLETMEVVQQTRVDKLTQGRQTYDWTLNRNQPAATALANTIEVFRSNGLTANESGRLIDFLKDVMESMDKEEMEITTHFQRKRRVRDNMTKKMVTQRTIGKKKQRLNKRSYLIRALTLNTMTKDAERGKLKRRAIATPGMQIRGFVYFVETLARSICEKLEQSGLPVGGNEKKAKLANVVRKMMTNSQDTELSFTITGDNTKWNENQNPRMFLAMITYITRNQPEWFRNVLSIAPIMFSNKMARLGKGYMFESKSMKLRTQIPAEMLADIDLKYFNESTRKKIEKIRPLLIDGTASLSPGMMMGMFNMLSTVLGVSILNLGQKRYTKTTYWWDGLQSSDDFALIVNAPNHEGIQAGVDRFYRTCKLVGINMSKKKSYINRTGTFEFTSFFYRYGFVANFSMELPSFGVSGINESADMSIGVTVIKNNMINNDLGPATAQMALQLFIKDYRYTYRCHRGDTQIQTRRSFELKKLWEQTRSKAGLLVSDGGPNLYNIRNLHIPEVCLKWELMDEDYQGRLCNPLNPFVSHKEIESVNNAVVMPAHGPAKSMEYDAVATTHSWIPKRNRSILNTSQRGILEDEQMYQKCCNLFEKFFPSSSYRRPVGISSMVEAMVSRARIDARIDFESGRIKKEEFAEIMKICSTIEELRRQK.

Residues 50–82 form a disordered region; that stretch reads SEKGKWTTNTETGAPQLNPIDGPLPEDNEPSGY. Over residues 55–64 the composition is skewed to polar residues; the sequence is WTTNTETGAP. Short sequence motifs (nuclear localization signal) lie at residues 187-195 and 203-216; these read RKRRVRDNM and RTIGKKKQRLNKRS. The tract at residues 249-256 is promoter-binding site; sequence RGFVYFVE. The 198-residue stretch at 286–483 folds into the RdRp catalytic domain; sequence VRKMMTNSQD…GINMSKKKSY (198 aa).

The protein belongs to the influenza viruses polymerase PB1 family. Influenza RNA polymerase is composed of three subunits: PB1, PB2 and PA. Interacts (via N-terminus) with PA (via C-terminus). Interacts (via C-terminus) with PB2 (via N-terminus); this interaction is essential for transcription initiation. In terms of processing, phosphorylated by host PRKCA.

It localises to the host nucleus. The protein resides in the host cytoplasm. It carries out the reaction RNA(n) + a ribonucleoside 5'-triphosphate = RNA(n+1) + diphosphate. RNA-dependent RNA polymerase which is responsible for replication and transcription of virus RNA segments. The transcription of viral mRNAs occurs by a unique mechanism called cap-snatching. 5' methylated caps of cellular mRNAs are cleaved after 10-13 nucleotides by PA. In turn, these short capped RNAs are used as primers by PB1 for transcription of viral mRNAs. During virus replication, PB1 initiates RNA synthesis and copy vRNA into complementary RNA (cRNA) which in turn serves as a template for the production of more vRNAs. The chain is RNA-directed RNA polymerase catalytic subunit from Aves (Human).